A 687-amino-acid polypeptide reads, in one-letter code: Glycine--tRNA ligase beta subunit (687 aa).

This sequence belongs to the class-II aminoacyl-tRNA synthetase family. In terms of assembly, tetramer of two alpha and two beta subunits.

It localises to the cytoplasm. The enzyme catalyses tRNA(Gly) + glycine + ATP = glycyl-tRNA(Gly) + AMP + diphosphate. The chain is Glycine--tRNA ligase beta subunit from Neisseria meningitidis serogroup B (strain ATCC BAA-335 / MC58).